The following is a 1124-amino-acid chain: Transient-receptor-potential-like protein (1124 aa).

The tract at residues 1-24 (MGRKKKLPTGVSSGVSHASSAPKS) is disordered. Over 1 to 340 (MGRKKKLPTG…GFRRKSIVDK (340 aa)) the chain is Cytoplasmic. The segment covering 10–21 (GVSSGVSHASSA) has biased composition (low complexity). 3 ANK repeats span residues 40-69 (LEEK…RHQH), 78-107 (LGRR…ETKD), and 152-181 (PDIT…AVPV). The chain crosses the membrane as a helical span at residues 341–361 (VICIAQVAVLFPLYCLIYMCA). Residues 362–373 (PNCRTGQLMRKP) are Extracellular-facing. A helical transmembrane segment spans residues 374–394 (FMKFLIHASSYLFFLFILILV). Over 395–431 (SQRADDDFVRIFGTTRMKKELAEQELRQRGQTPSKLE) the chain is Cytoplasmic. Residues 432–452 (LIVVMYVIGFVWEEVQEIFAV) traverse the membrane as a helical segment. At 453 to 512 (GMKSYLRNMWNFIDFLRNSLYVSVMCLRAFAYIQQATEIARDPQMAYIPREKWHDFDPQL) the chain is on the extracellular side. Residues 513 to 533 (IAEGLFAAANVFSALKLVHLF) form a helical membrane-spanning segment. At 534-548 (SINPHLGPLQISLGR) the chain is on the cytoplasmic side. The chain crosses the membrane as a helical span at residues 549-569 (MVIDIVKFFFIYTLVLFAFAC). Residues 570–645 (GLNQLLWYFA…GIKSYTRFWG (76 aa)) are Extracellular-facing. A helical transmembrane segment spans residues 646–666 (LLMFGSYSVINVIVLLNLLIA). The Cytoplasmic portion of the chain corresponds to 667 to 1124 (MMSNSYAMID…TSPQRPKHRN (458 aa)). 2 calmodulin-binding regions span residues 710–728 (SVKW…IDRQ) and 853–895 (IPSK…SQIG). Disordered regions lie at residues 978-1013 (RAMA…GVSH) and 1031-1124 (LIAN…KHRN). A compositionally biased stretch (low complexity) spans 1035 to 1063 (SAPSAPTAPPKKSAPTAPTPTYKPTTHAP). Basic and acidic residues-rich tracts occupy residues 1069–1081 (GNRE…DGVR) and 1090–1106 (HVVD…RDNV). Over residues 1107–1118 (SDISSIASTSPQ) the composition is skewed to polar residues.

It belongs to the transient receptor (TC 1.A.4) family. STrpC subfamily. As to quaternary structure, forms heteromultimers with Trpgamma and, to a lower extent, with trp. Interacts with Fkbp59 in vivo and is found in the inaD signaling complex. Expressed predominantly in the rhabdomeres of photoreceptor cells.

It is found in the membrane. The protein localises to the cell projection. It localises to the rhabdomere membrane. A light-sensitive calcium channel that is required for inositide-mediated Ca(2+) entry in the retina during phospholipase C (PLC)-mediated phototransduction. Required for vision in the dark and in dim light. Binds calmodulin. Trp and trpl act together in the light response, although it is unclear whether as heteromultimers or distinct units. Also forms a functional cation channel with Trpgamma. Activated by fatty acids, metabolic stress, inositols and GTP-binding proteins. The protein is Transient-receptor-potential-like protein (trpl) of Drosophila melanogaster (Fruit fly).